We begin with the raw amino-acid sequence, 406 residues long: Arginine biosynthesis bifunctional protein ArgJ (406 aa).

Residues Thr-152, Lys-179, Thr-190, Glu-277, Asn-401, and Ser-406 each coordinate substrate. Catalysis depends on Thr-190, which acts as the Nucleophile.

Belongs to the ArgJ family. Heterotetramer of two alpha and two beta chains.

It localises to the cytoplasm. It catalyses the reaction N(2)-acetyl-L-ornithine + L-glutamate = N-acetyl-L-glutamate + L-ornithine. It carries out the reaction L-glutamate + acetyl-CoA = N-acetyl-L-glutamate + CoA + H(+). Its pathway is amino-acid biosynthesis; L-arginine biosynthesis; L-ornithine and N-acetyl-L-glutamate from L-glutamate and N(2)-acetyl-L-ornithine (cyclic): step 1/1. It participates in amino-acid biosynthesis; L-arginine biosynthesis; N(2)-acetyl-L-ornithine from L-glutamate: step 1/4. Functionally, catalyzes two activities which are involved in the cyclic version of arginine biosynthesis: the synthesis of N-acetylglutamate from glutamate and acetyl-CoA as the acetyl donor, and of ornithine by transacetylation between N(2)-acetylornithine and glutamate. This is Arginine biosynthesis bifunctional protein ArgJ from Neisseria gonorrhoeae.